A 60-amino-acid polypeptide reads, in one-letter code: Large ribosomal subunit protein uL30 (60 aa).

This sequence belongs to the universal ribosomal protein uL30 family. Part of the 50S ribosomal subunit.

In Leuconostoc citreum (strain KM20), this protein is Large ribosomal subunit protein uL30.